The sequence spans 89 residues: Small ribosomal subunit protein uS15 (89 aa).

The protein belongs to the universal ribosomal protein uS15 family. Part of the 30S ribosomal subunit. Forms a bridge to the 50S subunit in the 70S ribosome, contacting the 23S rRNA.

Functionally, one of the primary rRNA binding proteins, it binds directly to 16S rRNA where it helps nucleate assembly of the platform of the 30S subunit by binding and bridging several RNA helices of the 16S rRNA. Its function is as follows. Forms an intersubunit bridge (bridge B4) with the 23S rRNA of the 50S subunit in the ribosome. The polypeptide is Small ribosomal subunit protein uS15 (Rhizobium meliloti (strain 1021) (Ensifer meliloti)).